The following is a 145-amino-acid chain: Hemoglobin subunit beta-2 (145 aa).

Residues 2–145 (HLTAEDRKEI…GVSHALGHGY (144 aa)) enclose the Globin domain. Heme b-binding residues include His-63 and His-92.

It belongs to the globin family. Minor hemoglobin is a tetramer of two alpha-2 chains and two beta-2 chains. Red blood cells.

Involved in oxygen transport from the lung to the various peripheral tissues. This is Hemoglobin subunit beta-2 (HBB2) from Triturus cristatus (Great crested newt).